We begin with the raw amino-acid sequence, 423 residues long: COP9 signalosome complex subunit 3 (423 aa).

Ala2 carries the post-translational modification N-acetylalanine. The PCI domain occupies 197-365 (NFERALYFYE…GMVSFHDNPE (169 aa)). The disordered stretch occupies residues 402–423 (QFVQKSMGSQEDDSGNKPSSYS). Ser407, Ser410, and Ser423 each carry phosphoserine.

The protein belongs to the CSN3 family. In terms of assembly, component of the CSN complex, composed of COPS1/GPS1, COPS2, COPS3, COPS4, COPS5, COPS6, COPS7 (COPS7A or COPS7B), COPS8 and COPS9. In the complex, it probably interacts directly with COPS1, COPS4, COPS8 and COPS9. Interacts with CK2 and PKD. Interacts with the translation initiation factor EIF3S6 and IKBKG. Interacts with ERCC6. As to expression, widely expressed.

The protein localises to the cytoplasm. The protein resides in the nucleus. Its function is as follows. Component of the COP9 signalosome complex (CSN), a complex involved in various cellular and developmental processes. The CSN complex is an essential regulator of the ubiquitin (Ubl) conjugation pathway by mediating the deneddylation of the cullin subunits of SCF-type E3 ligase complexes, leading to decrease the Ubl ligase activity of SCF-type complexes such as SCF, CSA or DDB2. The complex is also involved in phosphorylation of p53/TP53, c-jun/JUN, IkappaBalpha/NFKBIA, ITPK1 and IRF8/ICSBP, possibly via its association with CK2 and PKD kinases. CSN-dependent phosphorylation of TP53 and JUN promotes and protects degradation by the Ubl system, respectively. Essential to maintain the survival of epiblast cells and thus the development of the postimplantation embryo. This is COP9 signalosome complex subunit 3 (Cops3) from Mus musculus (Mouse).